The chain runs to 514 residues: Glutamyl-tRNA(Gln) amidotransferase subunit B, mitochondrial (514 aa).

The protein belongs to the GatB/GatE family. GatB subfamily. As to quaternary structure, subunit of the heterotrimeric GatCAB amidotransferase (AdT) complex, composed of A, B and C subunits.

The protein localises to the mitochondrion. The enzyme catalyses L-glutamyl-tRNA(Gln) + L-glutamine + ATP + H2O = L-glutaminyl-tRNA(Gln) + L-glutamate + ADP + phosphate + H(+). Its function is as follows. Allows the formation of correctly charged Gln-tRNA(Gln) through the transamidation of misacylated Glu-tRNA(Gln) in the mitochondria. The reaction takes place in the presence of glutamine and ATP through an activated gamma-phospho-Glu-tRNA(Gln). The chain is Glutamyl-tRNA(Gln) amidotransferase subunit B, mitochondrial from Naegleria gruberi (Amoeba).